The primary structure comprises 478 residues: Glutamate--tRNA ligase 1 (478 aa).

The 'HIGH' region motif lies at 10–20 (PSPTGFLHIGG). The 'KMSKS' region motif lies at 242–246 (KLSKR). Lysine 245 contributes to the ATP binding site.

This sequence belongs to the class-I aminoacyl-tRNA synthetase family. Glutamate--tRNA ligase type 1 subfamily. In terms of assembly, monomer.

Its subcellular location is the cytoplasm. The catalysed reaction is tRNA(Glu) + L-glutamate + ATP = L-glutamyl-tRNA(Glu) + AMP + diphosphate. Catalyzes the attachment of glutamate to tRNA(Glu) in a two-step reaction: glutamate is first activated by ATP to form Glu-AMP and then transferred to the acceptor end of tRNA(Glu). This Orientia tsutsugamushi (strain Boryong) (Rickettsia tsutsugamushi) protein is Glutamate--tRNA ligase 1.